The chain runs to 164 residues: Urease subunit beta (164 aa).

2 stretches are compositionally biased toward polar residues: residues 1–10 and 20–30; these read MSTKTNSTKA and TNRGTKSSAGY. Residues 1-30 form a disordered region; the sequence is MSTKTNSTKATSEKTDSLKTNRGTKSSAGY.

This sequence belongs to the urease beta subunit family. As to quaternary structure, heterotrimer of UreA (gamma), UreB (beta) and UreC (alpha) subunits. Three heterotrimers associate to form the active enzyme.

The protein resides in the cytoplasm. It carries out the reaction urea + 2 H2O + H(+) = hydrogencarbonate + 2 NH4(+). It functions in the pathway nitrogen metabolism; urea degradation; CO(2) and NH(3) from urea (urease route): step 1/1. Functionally, expression of the urease operon increases the likelihood of bacterial survival by contributing to acid resistance in vitro and in vivo in BALB/c mice. Y.enterocolitica enters the body via an oral path and must survive the acidic stomach before being able to colonize the intestinal mucosa. The polypeptide is Urease subunit beta (Yersinia enterocolitica).